Reading from the N-terminus, the 641-residue chain is Probable licABCH operon regulator (641 aa).

PRD domains lie at 184 to 289 (ILPK…TQSQ) and 296 to 403 (SIEE…KKTE). A phosphohistidine; by HPr mark is found at H219, H278, H333, and H392. Residues 407-498 (KRCIIVCASG…ILSDEKEKAN (92 aa)) form the PTS EIIB type-2 domain. C413 carries the post-translational modification Phosphocysteine; by EIIA. The 140-residue stretch at 499 to 638 (RYLKKELVFF…QELSDVFDQK (140 aa)) folds into the PTS EIIA type-2 domain. H559 is subject to Phosphohistidine; by EIIB.

This sequence belongs to the transcriptional antiterminator BglG family.

Its activity is regulated as follows. The regulatory activity of LicR is modulated by phosphorylation and dephosphorylation of the various LicR domains. It becomes activated via phosphoryl group transfer from PEP, EI and HPr on the two conserved histidine residues in the PRD 2 domain, whereas phosphorylation of the EIIA-like domain on His-559 by the PTS EIIB component LicB inactivates LicR. Its function is as follows. Positive regulator of the licABCH operon. In Bacillus subtilis (strain 168), this protein is Probable licABCH operon regulator (licR).